A 380-amino-acid polypeptide reads, in one-letter code: Phospho-N-acetylmuramoyl-pentapeptide-transferase (380 aa).

11 helical membrane-spanning segments follow: residues 26-46, 75-95, 98-118, 135-155, 161-181, 183-203, 222-242, 259-279, 283-303, 311-331, and 357-377; these read IVAA…IFIE, MGGA…ADLA, FVWA…TDDW, LVLQ…DWRF, FPWV…FVPS, LFNP…VIAT, VVSA…IAGF, LGVF…YNTY, VFMG…MAVL, AILH…VWSF, and KIIV…LLSI.

The protein belongs to the glycosyltransferase 4 family. MraY subfamily. Mg(2+) serves as cofactor.

It is found in the cell inner membrane. The enzyme catalyses UDP-N-acetyl-alpha-D-muramoyl-L-alanyl-gamma-D-glutamyl-meso-2,6-diaminopimeloyl-D-alanyl-D-alanine + di-trans,octa-cis-undecaprenyl phosphate = di-trans,octa-cis-undecaprenyl diphospho-N-acetyl-alpha-D-muramoyl-L-alanyl-D-glutamyl-meso-2,6-diaminopimeloyl-D-alanyl-D-alanine + UMP. It participates in cell wall biogenesis; peptidoglycan biosynthesis. Catalyzes the initial step of the lipid cycle reactions in the biosynthesis of the cell wall peptidoglycan: transfers peptidoglycan precursor phospho-MurNAc-pentapeptide from UDP-MurNAc-pentapeptide onto the lipid carrier undecaprenyl phosphate, yielding undecaprenyl-pyrophosphoryl-MurNAc-pentapeptide, known as lipid I. In Anaeromyxobacter dehalogenans (strain 2CP-1 / ATCC BAA-258), this protein is Phospho-N-acetylmuramoyl-pentapeptide-transferase.